The chain runs to 365 residues: Glycerol dehydrogenase (365 aa).

NAD(+)-binding residues include Asp37, Gly94, Lys95, Thr116, and Ser119. Asp121 provides a ligand contact to glycerol. Positions 125, 127, and 131 each coordinate NAD(+). Positions 171, 254, and 271 each coordinate Mn(2+). A glycerol-binding site is contributed by His254.

It belongs to the iron-containing alcohol dehydrogenase family. Homohexamer. It depends on Mn(2+) as a cofactor.

The catalysed reaction is glycerol + NAD(+) = dihydroxyacetone + NADH + H(+). The enzyme catalyses hydroxyacetone + NADH + H(+) = (S)-propane-1,2-diol + NAD(+). It participates in polyol metabolism; glycerol fermentation; glycerone phosphate from glycerol (oxidative route): step 1/2. With respect to regulation, inhibited by zinc. Catalyzes the NAD-dependent oxidation of glycerol to dihydroxyacetone (glycerone). Allows microorganisms to utilize glycerol as a source of carbon under anaerobic conditions. Exhibits a rather broad substrate specificity since it can also oxidize 1,2-propanediol and 2,3-butanediol and reduce dihydroxyacetone. Cannot use NADP(+) as an electron acceptor for the oxidation of glycerol. The polypeptide is Glycerol dehydrogenase (Citrobacter freundii).